Consider the following 206-residue polypeptide: Small ribosomal subunit protein uS4 (206 aa).

The 61-residue stretch at 96–156 (GRLDNVVYRM…EKAKNQLRVK (61 aa)) folds into the S4 RNA-binding domain.

It belongs to the universal ribosomal protein uS4 family. In terms of assembly, part of the 30S ribosomal subunit. Contacts protein S5. The interaction surface between S4 and S5 is involved in control of translational fidelity.

Functionally, one of the primary rRNA binding proteins, it binds directly to 16S rRNA where it nucleates assembly of the body of the 30S subunit. With S5 and S12 plays an important role in translational accuracy. In Marinobacter nauticus (strain ATCC 700491 / DSM 11845 / VT8) (Marinobacter aquaeolei), this protein is Small ribosomal subunit protein uS4.